The primary structure comprises 574 residues: DNA mismatch repair protein MutL (574 aa).

This sequence belongs to the DNA mismatch repair MutL/HexB family.

This protein is involved in the repair of mismatches in DNA. It is required for dam-dependent methyl-directed DNA mismatch repair. May act as a 'molecular matchmaker', a protein that promotes the formation of a stable complex between two or more DNA-binding proteins in an ATP-dependent manner without itself being part of a final effector complex. In Coxiella burnetii (strain Dugway 5J108-111), this protein is DNA mismatch repair protein MutL.